Here is a 157-residue protein sequence, read N- to C-terminus: Small ribosomal subunit protein uS7 (157 aa).

Belongs to the universal ribosomal protein uS7 family. Part of the 30S ribosomal subunit. Contacts proteins S9 and S11.

Functionally, one of the primary rRNA binding proteins, it binds directly to 16S rRNA where it nucleates assembly of the head domain of the 30S subunit. Is located at the subunit interface close to the decoding center, probably blocks exit of the E-site tRNA. The sequence is that of Small ribosomal subunit protein uS7 from Chlamydia trachomatis serovar A (strain ATCC VR-571B / DSM 19440 / HAR-13).